The following is a 189-amino-acid chain: Elongation factor P (189 aa).

The protein belongs to the elongation factor P family.

It is found in the cytoplasm. It participates in protein biosynthesis; polypeptide chain elongation. Involved in peptide bond synthesis. Stimulates efficient translation and peptide-bond synthesis on native or reconstituted 70S ribosomes in vitro. Probably functions indirectly by altering the affinity of the ribosome for aminoacyl-tRNA, thus increasing their reactivity as acceptors for peptidyl transferase. The chain is Elongation factor P from Onion yellows phytoplasma (strain OY-M).